The primary structure comprises 596 residues: Delta(24(24(1)))-sterol reductase (596 aa).

The disordered stretch occupies residues 1-122; it reads MSSRYSLRQT…GHATNGHATS (122 aa). The segment covering 98-112 has biased composition (gly residues); sequence NGNGNGYTNGHGNGN. The next 8 membrane-spanning stretches (helical) occupy residues 168-188, 225-245, 269-289, 296-316, 353-373, 381-401, 419-439, and 454-474; these read FGTA…WIGA, VWAW…LLPG, WSLY…IWPL, FGPL…VAYF, MFFE…GTAA, YVSG…NACA, GFML…HCTI, and GILA…DSCN. Residues K477, R481, L516, and 528 to 529 each bind NADP(+); that span reads HY. A helical transmembrane segment spans residues 535 to 557; that stretch reads FAVSWGLITGFESPFPWFYPVFF. NADP(+) contacts are provided by residues D568, 572–576, and Y583; that span reads CRRKY.

It belongs to the ERG4/ERG24 family.

The protein localises to the endoplasmic reticulum membrane. The enzyme catalyses ergosterol + NADP(+) = ergosta-5,7,22,24(28)-tetraen-3beta-ol + NADPH + H(+). It functions in the pathway steroid metabolism; ergosterol biosynthesis. In terms of biological role, delta(24(24(1)))-sterol reductase; part of the third module of ergosterol biosynthesis pathway that includes the late steps of the pathway. ERG4 catalyzes the last step of ergosterol biosynthesis by converting ergosta-5,7,22,24(28)-tetraen-3beta-ol into ergosterol. The third module or late pathway involves the ergosterol synthesis itself through consecutive reactions that mainly occur in the endoplasmic reticulum (ER) membrane. Firstly, the squalene synthase ERG9 catalyzes the condensation of 2 farnesyl pyrophosphate moieties to form squalene, which is the precursor of all steroids. Squalene synthase is crucial for balancing the incorporation of farnesyl diphosphate (FPP) into sterol and nonsterol isoprene synthesis. Secondly, squalene is converted into lanosterol by the consecutive action of the squalene epoxidase ERG1 and the lanosterol synthase ERG7. Then, the delta(24)-sterol C-methyltransferase ERG6 methylates lanosterol at C-24 to produce eburicol. Eburicol is the substrate of the sterol 14-alpha demethylase encoded by CYP51A, CYP51B and CYP51C, to yield 4,4,24-trimethyl ergosta-8,14,24(28)-trienol. CYP51B encodes the enzyme primarily responsible for sterol 14-alpha-demethylation, and plays an essential role in ascospore formation. CYP51A encodes an additional sterol 14-alpha-demethylase, induced on ergosterol depletion and responsible for the intrinsic variation in azole sensitivity. The third CYP51 isoform, CYP51C, does not encode a sterol 14-alpha-demethylase, but is required for full virulence on host wheat ears. The C-14 reductase ERG24 then reduces the C14=C15 double bond which leads to 4,4-dimethylfecosterol. A sequence of further demethylations at C-4, involving the C-4 demethylation complex containing the C-4 methylsterol oxidases ERG25, the sterol-4-alpha-carboxylate 3-dehydrogenase ERG26 and the 3-keto-steroid reductase ERG27, leads to the production of fecosterol via 4-methylfecosterol. ERG28 has a role as a scaffold to help anchor ERG25, ERG26 and ERG27 to the endoplasmic reticulum. The C-8 sterol isomerase ERG2 then catalyzes the reaction which results in unsaturation at C-7 in the B ring of sterols and thus converts fecosterol to episterol. The sterol-C5-desaturases ERG3A and ERG3BB then catalyze the introduction of a C-5 double bond in the B ring to produce 5-dehydroepisterol. The C-22 sterol desaturases ERG5A and ERG5B further convert 5-dehydroepisterol into ergosta-5,7,22,24(28)-tetraen-3beta-ol by forming the C-22(23) double bond in the sterol side chain. Finally, ergosta-5,7,22,24(28)-tetraen-3beta-ol is substrate of the C-24(28) sterol reductase ERG4 to produce ergosterol. The sequence is that of Delta(24(24(1)))-sterol reductase from Gibberella zeae (strain ATCC MYA-4620 / CBS 123657 / FGSC 9075 / NRRL 31084 / PH-1) (Wheat head blight fungus).